The chain runs to 196 residues: RNA pyrophosphohydrolase (196 aa).

One can recognise a Nudix hydrolase domain in the interval 6–149; it reads GYRPNVGIVI…KRDVYRKVMK (144 aa). Positions 38–59 match the Nudix box motif; it reads GGINDNESAEQAMYRELHEEVG.

The protein belongs to the Nudix hydrolase family. RppH subfamily. The cofactor is a divalent metal cation.

Functionally, accelerates the degradation of transcripts by removing pyrophosphate from the 5'-end of triphosphorylated RNA, leading to a more labile monophosphorylated state that can stimulate subsequent ribonuclease cleavage. The protein is RNA pyrophosphohydrolase of Haemophilus influenzae (strain PittEE).